The chain runs to 550 residues: Hydroxylamine reductase (550 aa).

Cys-3, Cys-6, Cys-18, and Cys-25 together coordinate [2Fe-2S] cluster. Residues His-249, Glu-273, Cys-317, Cys-405, Cys-433, Cys-458, Glu-492, and Lys-494 each contribute to the hybrid [4Fe-2O-2S] cluster site. Cys-405 bears the Cysteine persulfide mark.

The protein belongs to the HCP family. Requires [2Fe-2S] cluster as cofactor. The cofactor is hybrid [4Fe-2O-2S] cluster.

The protein localises to the cytoplasm. It carries out the reaction A + NH4(+) + H2O = hydroxylamine + AH2 + H(+). In terms of biological role, catalyzes the reduction of hydroxylamine to form NH(3) and H(2)O. This chain is Hydroxylamine reductase, found in Escherichia fergusonii (strain ATCC 35469 / DSM 13698 / CCUG 18766 / IAM 14443 / JCM 21226 / LMG 7866 / NBRC 102419 / NCTC 12128 / CDC 0568-73).